The chain runs to 547 residues: CTP synthase (547 aa).

The segment at 1 to 267 (MKTKFIFITG…DQKIAIMLRL (267 aa)) is amidoligase domain. CTP is bound at residue serine 14. A UTP-binding site is contributed by serine 14. ATP is bound by residues 15–20 (SLGKGL) and aspartate 72. Residues aspartate 72 and glutamate 141 each coordinate Mg(2+). Residues 148 to 150 (DIE), 188 to 193 (KTKPTQ), and lysine 224 each bind CTP. UTP is bound by residues 188–193 (KTKPTQ) and lysine 224. The Glutamine amidotransferase type-1 domain maps to 292-545 (TIGIVGKYVD…IRAAKTHPAG (254 aa)). Glycine 354 serves as a coordination point for L-glutamine. Cysteine 381 (nucleophile; for glutamine hydrolysis) is an active-site residue. L-glutamine contacts are provided by residues 382-385 (LGMQ), glutamate 405, and arginine 473. Active-site residues include histidine 518 and glutamate 520.

It belongs to the CTP synthase family. In terms of assembly, homotetramer.

It carries out the reaction UTP + L-glutamine + ATP + H2O = CTP + L-glutamate + ADP + phosphate + 2 H(+). The catalysed reaction is L-glutamine + H2O = L-glutamate + NH4(+). It catalyses the reaction UTP + NH4(+) + ATP = CTP + ADP + phosphate + 2 H(+). Its pathway is pyrimidine metabolism; CTP biosynthesis via de novo pathway; CTP from UDP: step 2/2. With respect to regulation, allosterically activated by GTP, when glutamine is the substrate; GTP has no effect on the reaction when ammonia is the substrate. The allosteric effector GTP functions by stabilizing the protein conformation that binds the tetrahedral intermediate(s) formed during glutamine hydrolysis. Inhibited by the product CTP, via allosteric rather than competitive inhibition. Catalyzes the ATP-dependent amination of UTP to CTP with either L-glutamine or ammonia as the source of nitrogen. Regulates intracellular CTP levels through interactions with the four ribonucleotide triphosphates. This is CTP synthase from Nitratidesulfovibrio vulgaris (strain DP4) (Desulfovibrio vulgaris).